Consider the following 386-residue polypeptide: MKRTLGHALIIIGAALIVIAVLLPTFLVPRLRVIPLDTVSDTITEVRDGTLLDSSQLGKNEPTPNRKNDPRCKAETDEEKRDLPVHCFINDKTPMQSKRHVEIEEPADEKIATLQVGTTLLRDDRKEPKNLINAILDRITVDRSTAYPVDDPISSVAINAPQGGSDTKPPTFTRPGIQYQFPFGAQKKSYPYYDVQAMRNFEIDFVGEETQDGVKVYKYSMTIPPQNLYESLTEHFTRDGRKLTEADKSSLASMRLSFPAHKWGLEGDDDVELDRYYTNVRTVRVEPTSGVIVNGTEEMFMFYAKDDKEAEEIASKAGREKEAKEQNRTAMKYTAQWDEGSKGRQMDRAKEARKSLTIGGTVAPWILGILGLVPIVIGFRIRSKSA.

An N-terminal signal peptide occupies residues 1-35 (MKRTLGHALIIIGAALIVIAVLLPTFLVPRLRVIP). Polar residues predominate over residues 53 to 63 (DSSQLGKNEPT). The tract at residues 53 to 78 (DSSQLGKNEPTPNRKNDPRCKAETDE) is disordered. Over residues 64–78 (PNRKNDPRCKAETDE) the composition is skewed to basic and acidic residues.

It belongs to the PorA family.

It localises to the secreted. Its subcellular location is the cell wall. Forms water-filled channels that favor the permeation of cations. This is Porin PorA from Corynebacterium amycolatum.